The sequence spans 127 residues: uncharacterized protein (127 aa).

Positions 1–16 (MIKKIIFGIAILLSLS) are cleaved as a signal peptide. Cysteine 17 carries N-palmitoyl cysteine lipidation. The S-diacylglycerol cysteine moiety is linked to residue cysteine 17. The stretch at 56–101 (EVRKEIQEYRVEIVDINKKKRELYNSLSKEAQNFLAEQQKYKQKLS) forms a coiled coil. The interval 101–127 (SISKLPTEDDSPNNTANSKDNKDTDTK) is disordered.

It is found in the cell membrane. This is an uncharacterized protein from Rickettsia felis (strain ATCC VR-1525 / URRWXCal2) (Rickettsia azadi).